The primary structure comprises 126 residues: Histone H2B type 1-B (126 aa).

Residues 1–12 show a composition bias toward low complexity; it reads MPEPSKSAPAPK. The tract at residues 1–35 is disordered; that stretch reads MPEPSKSAPAPKKGSKKAITKAQKKDGKKRKRSRK. N-acetylproline is present on proline 2. Glutamate 3 is subject to ADP-ribosyl glutamic acid. An N6-(2-hydroxyisobutyryl)lysine; alternate modification is found at lysine 6. Residue lysine 6 is modified to N6-(beta-hydroxybutyryl)lysine; alternate. Residue lysine 6 is modified to N6-acetyllysine; alternate. The residue at position 6 (lysine 6) is an N6-butyryllysine; alternate. Lysine 6 is modified (N6-crotonyllysine; alternate). At lysine 6 the chain carries N6-lactoyllysine; alternate. Lysine 6 participates in a covalent cross-link: Glycyl lysine isopeptide (Lys-Gly) (interchain with G-Cter in SUMO2); alternate. Residue serine 7 is modified to ADP-ribosylserine. Lysine 12 carries the N6-(beta-hydroxybutyryl)lysine; alternate modification. N6-acetyllysine; alternate occurs at positions 12 and 13. N6-crotonyllysine; alternate is present on residues lysine 12 and lysine 13. Lysine 12 is modified (N6-lactoyllysine; alternate). An N6-(2-hydroxyisobutyryl)lysine; alternate modification is found at lysine 13. Serine 15 is modified (phosphoserine; by STK4/MST1). N6-acetyllysine; alternate occurs at positions 16, 17, 21, and 24. N6-crotonyllysine; alternate occurs at positions 16, 17, 21, and 24. Residues lysine 16, lysine 17, lysine 21, and lysine 24 each carry the N6-lactoyllysine; alternate modification. Lysine 17 and lysine 21 each carry N6-(beta-hydroxybutyryl)lysine; alternate. The residue at position 17 (lysine 17) is an N6-glutaryllysine; alternate. Residues lysine 21 and lysine 24 each carry the N6-(2-hydroxyisobutyryl)lysine; alternate modification. Residue lysine 21 is modified to N6-butyryllysine; alternate. Residue lysine 21 forms a Glycyl lysine isopeptide (Lys-Gly) (interchain with G-Cter in SUMO2); alternate linkage. Lysine 25 carries the post-translational modification N6-(2-hydroxyisobutyryl)lysine. Lysine 35 is modified (N6-(2-hydroxyisobutyryl)lysine; alternate). Lysine 35 carries the N6-(beta-hydroxybutyryl)lysine; alternate modification. Lysine 35 is subject to N6-crotonyllysine; alternate. Residue lysine 35 is modified to N6-glutaryllysine; alternate. Lysine 35 is modified (N6-succinyllysine; alternate). Residue lysine 35 forms a Glycyl lysine isopeptide (Lys-Gly) (interchain with G-Cter in ubiquitin); alternate linkage. The residue at position 36 (glutamate 36) is a PolyADP-ribosyl glutamic acid. Serine 37 is modified (phosphoserine; by AMPK). 3 positions are modified to N6-(2-hydroxyisobutyryl)lysine; alternate: lysine 44, lysine 47, and lysine 58. Lysine 44 carries the post-translational modification N6-lactoyllysine; alternate. N6-glutaryllysine; alternate is present on residues lysine 44 and lysine 47. The residue at position 47 (lysine 47) is an N6-methyllysine; alternate. Position 58 is an N6,N6-dimethyllysine; alternate (lysine 58). Arginine 80 carries the dimethylated arginine modification. The residue at position 86 (lysine 86) is an N6-(2-hydroxyisobutyryl)lysine; alternate. Lysine 86 carries the N6-(beta-hydroxybutyryl)lysine; alternate modification. N6-acetyllysine; alternate is present on lysine 86. Lysine 86 bears the N6-lactoyllysine; alternate mark. Residue lysine 86 is modified to N6,N6,N6-trimethyllysine; alternate. Omega-N-methylarginine occurs at positions 87 and 93. Lysine 109 carries the N6-(2-hydroxyisobutyryl)lysine; alternate modification. Lysine 109 is subject to N6-lactoyllysine; alternate. Lysine 109 carries the N6-glutaryllysine; alternate modification. Lysine 109 carries the N6-methyllysine; alternate modification. Serine 113 carries O-linked (GlcNAc) serine glycosylation. Residue threonine 116 is modified to Phosphothreonine. Residues lysine 117 and lysine 121 each carry the N6-(2-hydroxyisobutyryl)lysine; alternate modification. An N6-(beta-hydroxybutyryl)lysine; alternate mark is found at lysine 117 and lysine 121. 2 positions are modified to N6-lactoyllysine; alternate: lysine 117 and lysine 121. Lysine 117 and lysine 121 each carry N6-glutaryllysine; alternate. 2 positions are modified to N6-succinyllysine; alternate: lysine 117 and lysine 121. The residue at position 117 (lysine 117) is an N6-malonyllysine; alternate. Residue lysine 117 is modified to N6-methylated lysine; alternate. Residue lysine 121 forms a Glycyl lysine isopeptide (Lys-Gly) (interchain with G-Cter in ubiquitin); alternate linkage.

This sequence belongs to the histone H2B family. In terms of assembly, the nucleosome is a histone octamer containing two molecules each of H2A, H2B, H3 and H4 assembled in one H3-H4 heterotetramer and two H2A-H2B heterodimers. The octamer wraps approximately 147 bp of DNA. Post-translationally, monoubiquitination at Lys-35 (H2BK34Ub) by the MSL1/MSL2 dimer is required for histone H3 'Lys-4' (H3K4me) and 'Lys-79' (H3K79me) methylation and transcription activation at specific gene loci, such as HOXA9 and MEIS1 loci. Similarly, monoubiquitination at Lys-121 (H2BK120Ub) by the RNF20/40 complex gives a specific tag for epigenetic transcriptional activation and is also prerequisite for histone H3 'Lys-4' and 'Lys-79' methylation. It also functions cooperatively with the FACT dimer to stimulate elongation by RNA polymerase II. H2BK120Ub also acts as a regulator of mRNA splicing: deubiquitination by USP49 is required for efficient cotranscriptional splicing of a large set of exons. Phosphorylation at Ser-37 (H2BS36ph) by AMPK in response to stress promotes transcription. Phosphorylated on Ser-15 (H2BS14ph) by STK4/MST1 during apoptosis; which facilitates apoptotic chromatin condensation. Also phosphorylated on Ser-15 in response to DNA double strand breaks (DSBs), and in correlation with somatic hypermutation and immunoglobulin class-switch recombination. In terms of processing, glcNAcylation at Ser-113 promotes monoubiquitination of Lys-121. It fluctuates in response to extracellular glucose, and associates with transcribed genes. Post-translationally, ADP-ribosylated by PARP1 or PARP2 on Ser-7 (H2BS6ADPr) in response to DNA damage. H2BS6ADPr promotes recruitment of CHD1L. Mono-ADP-ribosylated on Glu-3 (H2BE2ADPr) by PARP3 in response to single-strand breaks. Poly ADP-ribosylation on Glu-36 (H2BE35ADPr) by PARP1 regulates adipogenesis: it inhibits phosphorylation at Ser-37 (H2BS36ph), thereby blocking expression of pro-adipogenetic genes. Crotonylation (Kcr) is specifically present in male germ cells and marks testis-specific genes in post-meiotic cells, including X-linked genes that escape sex chromosome inactivation in haploid cells. Crotonylation marks active promoters and enhancers and confers resistance to transcriptional repressors. It is also associated with post-meiotically activated genes on autosomes. In terms of processing, lactylated in macrophages by EP300/P300 by using lactoyl-CoA directly derived from endogenous or exogenous lactate, leading to stimulates gene transcription.

The protein localises to the nucleus. It localises to the chromosome. In terms of biological role, core component of nucleosome. Nucleosomes wrap and compact DNA into chromatin, limiting DNA accessibility to the cellular machineries which require DNA as a template. Histones thereby play a central role in transcription regulation, DNA repair, DNA replication and chromosomal stability. DNA accessibility is regulated via a complex set of post-translational modifications of histones, also called histone code, and nucleosome remodeling. In Homo sapiens (Human), this protein is Histone H2B type 1-B.